We begin with the raw amino-acid sequence, 796 residues long: Peroxisome proliferator-activated receptor gamma coactivator 1-alpha (796 aa).

An N6-acetyllysine modification is found at Lys-77. The disordered stretch occupies residues Pro-98 to Glu-138. Over residues Asp-114–Pro-127 the composition is skewed to polar residues. Residues Leu-142–Leu-146 carry the LXXLL motif motif. Lys-144 carries the N6-acetyllysine modification. A Phosphothreonine; by AMPK modification is found at Thr-176. Position 182 is an N6-acetyllysine (Lys-182). The disordered stretch occupies residues Tyr-211–Glu-274. Residues Asp-217–Thr-235 are compositionally biased toward basic and acidic residues. A compositionally biased stretch (polar residues) spans Thr-242–Leu-258. N6-acetyllysine occurs at positions 252, 269, 276, and 319. Residues Gly-288–Gln-349 are disordered. Residues Gly-291–Thr-337 form an interaction with PPARG region. A compositionally biased stretch (polar residues) spans Ser-332 to Lys-344. Lys-345, Lys-411, and Lys-449 each carry N6-acetyllysine. The interval Glu-348 to Arg-796 is mediates interaction with RNF34. The disordered stretch occupies residues His-463–Phe-487. Positions Asp-477–Asp-486 are enriched in basic and acidic residues. Phosphoserine; by AMPK is present on Ser-537. 2 disordered regions span residues Phe-541–Glu-637 and Tyr-648–Arg-667. The span at Arg-568 to Ser-603 shows a compositional bias: low complexity. Positions Ser-620–Arg-629 are enriched in basic residues. The RRM domain occupies Arg-675 to Arg-751. Lys-756 and Lys-777 each carry N6-acetyllysine.

In terms of assembly, homooligomer. Interacts with MYBBP1A; inhibits MYBBP1A transcriptional activation. Interacts with PRDM16, LPIN1 and PML. Interacts (via LXXLL motif) with RORA and RORC (via AF-2 motif); activates RORA and RORC transcriptional activation. Interacts with LRPPRC. Interacts with FOXO1. Interacts with NR5A2. In terms of processing, phosphorylation by AMPK in skeletal muscle increases activation of its own promoter. Phosphorylated by CLK2. Heavily acetylated by KAT2A/GCN5 under conditions of high nutrients, leading to inactivation of PPARGC1A. Deacetylated by SIRT1 in low nutrients/high NAD conditions, leading to its activation. Post-translationally, ubiquitinated. Ubiquitination by RNF34 induces proteasomal degradation.

The protein localises to the nucleus. Its subcellular location is the PML body. Functionally, transcriptional coactivator for steroid receptors and nuclear receptors. Greatly increases the transcriptional activity of PPARG and thyroid hormone receptor on the uncoupling protein promoter. Can regulate key mitochondrial genes that contribute to the program of adaptive thermogenesis. Plays an essential role in metabolic reprogramming in response to dietary availability through coordination of the expression of a wide array of genes involved in glucose and fatty acid metabolism. Acts as a key regulator of gluconeogenesis: stimulates hepatic gluconeogenesis by increasing the expression of gluconeogenic enzymes, and acting together with FOXO1 to promote the fasting gluconeogenic program. Induces the expression of PERM1 in the skeletal muscle in an ESRRA-dependent manner. Also involved in the integration of the circadian rhythms and energy metabolism. Required for oscillatory expression of clock genes, such as BMAL1 and NR1D1, through the coactivation of RORA and RORC, and metabolic genes, such as PDK4 and PEPCK. In Sus scrofa (Pig), this protein is Peroxisome proliferator-activated receptor gamma coactivator 1-alpha (PPARGC1A).